Consider the following 299-residue polypeptide: Probable lipid kinase YegS (299 aa).

The DAGKc domain maps to 2-133 (AEFPASLLIL…IDMAQVNKQT (132 aa)). ATP contacts are provided by residues Thr-40, 66 to 72 (GDGTINE), and Thr-95. The Mg(2+) site is built by Leu-215, Asp-218, and Leu-220. Catalysis depends on Glu-271, which acts as the Proton acceptor.

The protein belongs to the diacylglycerol/lipid kinase family. YegS lipid kinase subfamily. Mg(2+) is required as a cofactor. Ca(2+) serves as cofactor.

It is found in the cytoplasm. In terms of biological role, probably phosphorylates lipids; the in vivo substrate is unknown. The polypeptide is Probable lipid kinase YegS (Escherichia coli O6:K15:H31 (strain 536 / UPEC)).